We begin with the raw amino-acid sequence, 346 residues long: Phosphoribosylformylglycinamidine cyclo-ligase (346 aa).

Belongs to the AIR synthase family.

It is found in the cytoplasm. The catalysed reaction is 2-formamido-N(1)-(5-O-phospho-beta-D-ribosyl)acetamidine + ATP = 5-amino-1-(5-phospho-beta-D-ribosyl)imidazole + ADP + phosphate + H(+). It participates in purine metabolism; IMP biosynthesis via de novo pathway; 5-amino-1-(5-phospho-D-ribosyl)imidazole from N(2)-formyl-N(1)-(5-phospho-D-ribosyl)glycinamide: step 2/2. In Alteromonas mediterranea (strain DSM 17117 / CIP 110805 / LMG 28347 / Deep ecotype), this protein is Phosphoribosylformylglycinamidine cyclo-ligase.